The primary structure comprises 1170 residues: Disease resistance protein LAZ5 (1170 aa).

Residues 10 to 172 (ESWQVFINFR…KIIDSIKKVL (163 aa)) enclose the TIR domain. The active site involves glutamate 84. Residues 193–219 (EAKNVDTFSPNSSDFPSTSIDDDLSIN) are disordered. Polar residues predominate over residues 198 to 219 (DTFSPNSSDFPSTSIDDDLSIN). The 253-residue stretch at 261-513 (RLKEMEEKLD…DVACFFKSEN (253 aa)) folds into the NB-ARC domain. LRR repeat units follow at residues 595 to 616 (MENV…TFDG), 622 to 645 (MCNL…IFKF), 646 to 670 (DTVR…PWEK), 677 to 700 (PENL…VKDT), 723 to 747 (AKNL…MENM), 761 to 785 (LTCL…KLEE), 790 to 813 (SENL…AGDL), 815 to 837 (RLVV…LGKQ), 838 to 861 (KALQ…VKDM), 862 to 885 (KHLR…SLKC), 888 to 904 (LSRN…LKDF), and 905 to 930 (SNLK…CLEY).

It carries out the reaction NAD(+) + H2O = ADP-D-ribose + nicotinamide + H(+). TIR-NB-LRR receptor-like protein that may play a role in plant innate immunity. May trigger hypersensitive programmed cell death in response to pathogen attack. Involved in tolerance to tobacco ringspot virus (TRSV). This Arabidopsis thaliana (Mouse-ear cress) protein is Disease resistance protein LAZ5.